A 145-amino-acid chain; its full sequence is Transcriptional regulator MraZ (145 aa).

SpoVT-AbrB domains are found at residues 7–54 and 83–126; these read NATN…GPDL and GVFM…QPQA.

The protein belongs to the MraZ family. In terms of assembly, forms oligomers.

The protein localises to the cytoplasm. It localises to the nucleoid. This is Transcriptional regulator MraZ from Rhizobium leguminosarum bv. trifolii (strain WSM2304).